Here is a 73-residue protein sequence, read N- to C-terminus: Cell division protein ZapB (73 aa).

Positions 3 to 67 (LELLSKLETK…WNDKVTGLVG (65 aa)) form a coiled coil.

The protein belongs to the ZapB family. Homodimer. The ends of the coiled-coil dimer bind to each other, forming polymers. Interacts with FtsZ.

It is found in the cytoplasm. In terms of biological role, non-essential, abundant cell division factor that is required for proper Z-ring formation. It is recruited early to the divisome by direct interaction with FtsZ, stimulating Z-ring assembly and thereby promoting cell division earlier in the cell cycle. Its recruitment to the Z-ring requires functional FtsA or ZipA. This Shewanella sp. (strain MR-4) protein is Cell division protein ZapB.